The chain runs to 202 residues: NADH-quinone oxidoreductase subunit C (202 aa).

The protein belongs to the complex I 30 kDa subunit family. As to quaternary structure, NDH-1 is composed of 14 different subunits. Subunits NuoB, C, D, E, F, and G constitute the peripheral sector of the complex.

The protein localises to the cell inner membrane. It carries out the reaction a quinone + NADH + 5 H(+)(in) = a quinol + NAD(+) + 4 H(+)(out). Its function is as follows. NDH-1 shuttles electrons from NADH, via FMN and iron-sulfur (Fe-S) centers, to quinones in the respiratory chain. The immediate electron acceptor for the enzyme in this species is believed to be ubiquinone. Couples the redox reaction to proton translocation (for every two electrons transferred, four hydrogen ions are translocated across the cytoplasmic membrane), and thus conserves the redox energy in a proton gradient. The chain is NADH-quinone oxidoreductase subunit C from Bartonella quintana (strain Toulouse) (Rochalimaea quintana).